We begin with the raw amino-acid sequence, 471 residues long: V-type ATP synthase beta chain (471 aa).

This sequence belongs to the ATPase alpha/beta chains family.

Produces ATP from ADP in the presence of a proton gradient across the membrane. The V-type beta chain is a regulatory subunit. The chain is V-type ATP synthase beta chain from Deinococcus deserti (strain DSM 17065 / CIP 109153 / LMG 22923 / VCD115).